Here is a 2586-residue protein sequence, read N- to C-terminus: Highly reducing polyketide synthase FUM1 (2586 aa).

The region spanning 29-451 (VLPVAIVGMG…GANAHCIIET (423 aa)) is the Ketosynthase family 3 (KS3) domain. Catalysis depends on for beta-ketoacyl synthase activity residues cysteine 201, histidine 336, and histidine 374. The segment at 609–928 (IFTGQGAQWV…TESLLKLAGE (320 aa)) is malonyl-CoA:ACP transacylase (MAT) domain. The segment at 980–1111 (HELLGSRTLE…GQVRPGQDAH (132 aa)) is N-terminal hotdog fold. The interval 980–1269 (HELLGSRTLE…LEDGKFSPLE (290 aa)) is dehydratase (DH) domain. A PKS/mFAS DH domain is found at 980–1274 (HELLGSRTLE…FSPLEMDLAE (295 aa)). Histidine 1012 serves as the catalytic Proton acceptor; for dehydratase activity. The C-terminal hotdog fold stretch occupies residues 1125 to 1274 (QHYPRLVDNL…FSPLEMDLAE (150 aa)). The Proton donor; for dehydratase activity role is filled by aspartate 1186. A methyltransferase (CMet) domain region spans residues 1450-1627 (DFFATAGHTR…GFSGVDSAIY (178 aa)). Positions 1862–2172 (GLLQTLGWVP…KGVHLGKIVV (311 aa)) are enoyl reductase (ER) (ER) domain. A ketoreductase (KR) domain region spans residues 2197–2373 (ASYLLVGGLG…ASVLQIGLIE (177 aa)). Residues 2486-2565 (PATVELVTNE…GLARLTVDGL (80 aa)) enclose the Carrier domain. Serine 2524 carries the O-(pantetheine 4'-phosphoryl)serine modification.

It participates in mycotoxin biosynthesis. Highly reducing polyketide synthase; part of the gene cluster that mediates the biosynthesis of fumonisins B1 (FB1), B2 (FB2), B3 (FB3), and B4 (FB4), which are carcinogenic mycotoxins. The biosynthesis starts with the FUM1-catalyzed carbon chain assembly from one molecule of acetyl-CoA, eight molecules of malonyl-CoA, and two molecules of methionine (in S-adenosyl form). The C18 polyketide chain is released from the enzyme by a nucleophilic attack of a carbanion, which is derived from R-carbon of alanine by decarboxylation, on the carbonyl carbon of polyketide acyl chain. This step is catalyzed by the pyridoxal 5'-phosphate-dependent aminoacyl transferase FUM8. The resultant 3-keto intermediate is then stereospecifically reduced to a 3-hydroxyl product by reductase FUM13. Subsequent oxidations at C-10 by the cytochrome P450 monooxygenase FUM2, C-14 and C-15 by FUM6, FUM12 or FUM15, tricarballylic esterification of the hydroxyl groups on C-14 and C-15 by acyltransferase FUM14, and C-5 hydroxylation by 2-keto-glutarate-dependent dioxygenase FUM3 furnish the biosynthesis of fumonisins. The tricarballylic moieties are most likely derived from the citric acid cycle, and their addition to the carbon backbone may involve FUM7, FUM10, FUM11 and FUM14. The sequence is that of Highly reducing polyketide synthase FUM1 from Gibberella moniliformis (strain M3125 / FGSC 7600) (Maize ear and stalk rot fungus).